Reading from the N-terminus, the 227-residue chain is Orotidine 5'-phosphate decarboxylase (227 aa).

Substrate is bound by residues D8, K30, 59–68 (DLKLYDIPYT), T118, R178, Q187, G207, and R208. The active-site Proton donor is K61.

Belongs to the OMP decarboxylase family. Type 1 subfamily. As to quaternary structure, homodimer.

The catalysed reaction is orotidine 5'-phosphate + H(+) = UMP + CO2. It functions in the pathway pyrimidine metabolism; UMP biosynthesis via de novo pathway; UMP from orotate: step 2/2. Its function is as follows. Catalyzes the decarboxylation of orotidine 5'-monophosphate (OMP) to uridine 5'-monophosphate (UMP). In Helicobacter pylori (strain ATCC 700392 / 26695) (Campylobacter pylori), this protein is Orotidine 5'-phosphate decarboxylase.